The primary structure comprises 817 residues: LisH domain-containing protein ARMC9 (817 aa).

One can recognise a LisH domain in the interval 7-39; it reads HESELLGLVKEYLDFAEFEDTLKTFSKECKVKG. Residues 204–230 are a coiled coil; the sequence is GPNSKELLQQLHQQLVEAERRAMTYLK. S583 is subject to Phosphoserine. Disordered stretches follow at residues 637-659 and 761-817; these read RKGPASVQWSGDEPLRRPVTPGG and CKPQ…SIRK. Residues 765 to 774 are compositionally biased toward polar residues; it reads VPSTPETVEQ. The span at 793–807 shows a compositional bias: low complexity; the sequence is PQQASRPASTASSTR. The span at 808 to 817 shows a compositional bias: polar residues; sequence GLHSSQSIRK.

In terms of assembly, interacts with TOGARAM1, CCDC66, CEP104, CSPP1 and CEP290. Interacts with NDUFAF2.

The protein localises to the cytoplasm. The protein resides in the cytoskeleton. It localises to the cilium basal body. Its subcellular location is the cell projection. It is found in the cilium. The protein localises to the microtubule organizing center. The protein resides in the centrosome. It localises to the centriole. Functionally, involved in ciliogenesis. It is required for appropriate acetylation and polyglutamylation of ciliary microtubules, and regulation of cilium length. Acts as a positive regulator of hedgehog (Hh) signaling. May participate in the trafficking and/or retention of GLI2 and GLI3 proteins at the ciliary tip. This is LisH domain-containing protein ARMC9 from Mus musculus (Mouse).